A 510-amino-acid polypeptide reads, in one-letter code: Bifunctional purine biosynthesis protein PurH (510 aa).

One can recognise an MGS-like domain in the interval 1 to 142 (MRALLSVSDK…KNFKDVLIVT (142 aa)).

Belongs to the PurH family.

It carries out the reaction (6R)-10-formyltetrahydrofolate + 5-amino-1-(5-phospho-beta-D-ribosyl)imidazole-4-carboxamide = 5-formamido-1-(5-phospho-D-ribosyl)imidazole-4-carboxamide + (6S)-5,6,7,8-tetrahydrofolate. The catalysed reaction is IMP + H2O = 5-formamido-1-(5-phospho-D-ribosyl)imidazole-4-carboxamide. It functions in the pathway purine metabolism; IMP biosynthesis via de novo pathway; 5-formamido-1-(5-phospho-D-ribosyl)imidazole-4-carboxamide from 5-amino-1-(5-phospho-D-ribosyl)imidazole-4-carboxamide (10-formyl THF route): step 1/1. It participates in purine metabolism; IMP biosynthesis via de novo pathway; IMP from 5-formamido-1-(5-phospho-D-ribosyl)imidazole-4-carboxamide: step 1/1. The sequence is that of Bifunctional purine biosynthesis protein PurH from Campylobacter concisus (strain 13826).